The following is a 74-amino-acid chain: Ribosome modulation factor (74 aa).

This sequence belongs to the ribosome modulation factor family.

The protein resides in the cytoplasm. During stationary phase, converts 70S ribosomes to an inactive dimeric form (100S ribosomes). In Cellvibrio japonicus (strain Ueda107) (Pseudomonas fluorescens subsp. cellulosa), this protein is Ribosome modulation factor.